A 189-amino-acid polypeptide reads, in one-letter code: Phosphoheptose isomerase (189 aa).

The 156-residue stretch at 34–189 (LVEAFRKGNK…CDLVEKALFA (156 aa)) folds into the SIS domain. 49-51 (NGG) lines the substrate pocket. 2 residues coordinate Zn(2+): His58 and Glu62. Residues Glu62, 91-92 (ND), 117-119 (STS), Ser122, and Gln169 each bind substrate. Zn(2+) contacts are provided by Gln169 and His177.

The protein belongs to the SIS family. GmhA subfamily. In terms of assembly, homotetramer. It depends on Zn(2+) as a cofactor.

It localises to the cytoplasm. It carries out the reaction 2 D-sedoheptulose 7-phosphate = D-glycero-alpha-D-manno-heptose 7-phosphate + D-glycero-beta-D-manno-heptose 7-phosphate. Its pathway is carbohydrate biosynthesis; D-glycero-D-manno-heptose 7-phosphate biosynthesis; D-glycero-alpha-D-manno-heptose 7-phosphate and D-glycero-beta-D-manno-heptose 7-phosphate from sedoheptulose 7-phosphate: step 1/1. Functionally, catalyzes the isomerization of sedoheptulose 7-phosphate in D-glycero-D-manno-heptose 7-phosphate. This Pelobacter propionicus (strain DSM 2379 / NBRC 103807 / OttBd1) protein is Phosphoheptose isomerase.